A 307-amino-acid chain; its full sequence is UDP-N-acetylenolpyruvoylglucosamine reductase (307 aa).

The 165-residue stretch at 34–198 (LGGKADVYIT…LEATFALKKA (165 aa)) folds into the FAD-binding PCMH-type domain. Arg177 is a catalytic residue. Ser227 functions as the Proton donor in the catalytic mechanism. Glu297 is a catalytic residue.

This sequence belongs to the MurB family. The cofactor is FAD.

The protein resides in the cytoplasm. It catalyses the reaction UDP-N-acetyl-alpha-D-muramate + NADP(+) = UDP-N-acetyl-3-O-(1-carboxyvinyl)-alpha-D-glucosamine + NADPH + H(+). The protein operates within cell wall biogenesis; peptidoglycan biosynthesis. Its function is as follows. Cell wall formation. The polypeptide is UDP-N-acetylenolpyruvoylglucosamine reductase (Oceanobacillus iheyensis (strain DSM 14371 / CIP 107618 / JCM 11309 / KCTC 3954 / HTE831)).